Consider the following 296-residue polypeptide: Large ribosomal subunit protein uL18A (296 aa).

The tract at residues 251-296 is disordered; sequence PVHEKKPKKEVKKKRWNRAKLSLEQKKDRVAQKKASFLRAQEKADS. Over residues 255-268 the composition is skewed to basic residues; sequence KKPKKEVKKKRWNR. Residues 271–281 show a composition bias toward basic and acidic residues; sequence LSLEQKKDRVA.

Belongs to the universal ribosomal protein uL18 family. As to quaternary structure, component of the large ribosomal subunit (LSU). Part of a LSU subcomplex, the 5S RNP which is composed of the 5S RNA, RPL5 and RPL11.

The protein localises to the cytoplasm. Its subcellular location is the nucleus. It is found in the nucleolus. Its function is as follows. Component of the ribosome, a large ribonucleoprotein complex responsible for the synthesis of proteins in the cell. The small ribosomal subunit (SSU) binds messenger RNAs (mRNAs) and translates the encoded message by selecting cognate aminoacyl-transfer RNA (tRNA) molecules. The large subunit (LSU) contains the ribosomal catalytic site termed the peptidyl transferase center (PTC), which catalyzes the formation of peptide bonds, thereby polymerizing the amino acids delivered by tRNAs into a polypeptide chain. The nascent polypeptides leave the ribosome through a tunnel in the LSU and interact with protein factors that function in enzymatic processing, targeting, and the membrane insertion of nascent chains at the exit of the ribosomal tunnel. As part of the 5S RNP/5S ribonucleoprotein particle it is an essential component of the LSU, required for its formation and the maturation of rRNAs. It also couples ribosome biogenesis to p53/TP53 activation. As part of the 5S RNP it accumulates in the nucleoplasm and inhibits MDM2, when ribosome biogenesis is perturbed, mediating the stabilization and the activation of TP53. This chain is Large ribosomal subunit protein uL18A (rpl5-a), found in Xenopus laevis (African clawed frog).